Consider the following 172-residue polypeptide: Nicotinamide-nucleotide adenylyltransferase (172 aa).

It belongs to the archaeal NMN adenylyltransferase family.

Its subcellular location is the cytoplasm. It carries out the reaction beta-nicotinamide D-ribonucleotide + ATP + H(+) = diphosphate + NAD(+). It functions in the pathway cofactor biosynthesis; NAD(+) biosynthesis; NAD(+) from nicotinamide D-ribonucleotide: step 1/1. This chain is Nicotinamide-nucleotide adenylyltransferase, found in Methanococcus aeolicus (strain ATCC BAA-1280 / DSM 17508 / OCM 812 / Nankai-3).